Here is a 362-residue protein sequence, read N- to C-terminus: Aspartate carbamoyltransferase catalytic subunit (362 aa).

Positions 1 to 22 (MPKTAMTDSTSKTSTNTASSDM) are disordered. Over residues 7-20 (TDSTSKTSTNTASS) the composition is skewed to low complexity. Carbamoyl phosphate-binding residues include R100 and T101. K128 provides a ligand contact to L-aspartate. R150, H180, and Q183 together coordinate carbamoyl phosphate. 2 residues coordinate L-aspartate: R214 and R269. Carbamoyl phosphate-binding residues include G310 and P311.

This sequence belongs to the aspartate/ornithine carbamoyltransferase superfamily. ATCase family. In terms of assembly, heterododecamer (2C3:3R2) of six catalytic PyrB chains organized as two trimers (C3), and six regulatory PyrI chains organized as three dimers (R2).

The enzyme catalyses carbamoyl phosphate + L-aspartate = N-carbamoyl-L-aspartate + phosphate + H(+). The protein operates within pyrimidine metabolism; UMP biosynthesis via de novo pathway; (S)-dihydroorotate from bicarbonate: step 2/3. Functionally, catalyzes the condensation of carbamoyl phosphate and aspartate to form carbamoyl aspartate and inorganic phosphate, the committed step in the de novo pyrimidine nucleotide biosynthesis pathway. The chain is Aspartate carbamoyltransferase catalytic subunit from Psychrobacter sp. (strain PRwf-1).